Here is a 330-residue protein sequence, read N- to C-terminus: ADP-L-glycero-D-manno-heptose-6-epimerase (330 aa).

NADP(+) is bound by residues 11–12, 32–33, K39, K54, 75–79, and N92; these read FI, DN, and EGACS. Y139 functions as the Proton acceptor in the catalytic mechanism. Residue K143 participates in NADP(+) binding. N168 contributes to the substrate binding site. Residues V169 and K177 each coordinate NADP(+). K177 functions as the Proton acceptor in the catalytic mechanism. Substrate contacts are provided by residues R179, H186, 200-203, R213, and Y292; that span reads FGEY.

Belongs to the NAD(P)-dependent epimerase/dehydratase family. HldD subfamily. In terms of assembly, homopentamer. NADP(+) serves as cofactor.

It carries out the reaction ADP-D-glycero-beta-D-manno-heptose = ADP-L-glycero-beta-D-manno-heptose. The protein operates within nucleotide-sugar biosynthesis; ADP-L-glycero-beta-D-manno-heptose biosynthesis; ADP-L-glycero-beta-D-manno-heptose from D-glycero-beta-D-manno-heptose 7-phosphate: step 4/4. Catalyzes the interconversion between ADP-D-glycero-beta-D-manno-heptose and ADP-L-glycero-beta-D-manno-heptose via an epimerization at carbon 6 of the heptose. The polypeptide is ADP-L-glycero-D-manno-heptose-6-epimerase (Burkholderia cenocepacia (strain HI2424)).